Consider the following 288-residue polypeptide: N-acetylneuraminate lyase (288 aa).

Aceneuramate is bound by residues Ser44 and Thr45. Tyr133 acts as the Proton donor in catalysis. Lys161 acts as the Schiff-base intermediate with substrate in catalysis. Aceneuramate-binding residues include Thr163, Gly185, Asp187, Glu188, and Ser204.

The protein belongs to the DapA family. NanA subfamily. Homotetramer.

It is found in the cytoplasm. The catalysed reaction is aceneuramate = aldehydo-N-acetyl-D-mannosamine + pyruvate. It functions in the pathway amino-sugar metabolism; N-acetylneuraminate degradation; D-fructose 6-phosphate from N-acetylneuraminate: step 1/5. Catalyzes the reversible aldol cleavage of N-acetylneuraminic acid (sialic acid; Neu5Ac) to form pyruvate and N-acetylmannosamine (ManNAc) via a Schiff base intermediate. The polypeptide is N-acetylneuraminate lyase (Clostridium perfringens (strain ATCC 13124 / DSM 756 / JCM 1290 / NCIMB 6125 / NCTC 8237 / Type A)).